The chain runs to 344 residues: Phenylalanine--tRNA ligase alpha subunit (344 aa).

Position 259 (Glu-259) interacts with Mg(2+).

This sequence belongs to the class-II aminoacyl-tRNA synthetase family. Phe-tRNA synthetase alpha subunit type 1 subfamily. As to quaternary structure, tetramer of two alpha and two beta subunits. Mg(2+) is required as a cofactor.

It is found in the cytoplasm. It carries out the reaction tRNA(Phe) + L-phenylalanine + ATP = L-phenylalanyl-tRNA(Phe) + AMP + diphosphate + H(+). The sequence is that of Phenylalanine--tRNA ligase alpha subunit from Petrotoga mobilis (strain DSM 10674 / SJ95).